The chain runs to 228 residues: HTH-type transcriptional regulator ArcR (228 aa).

22 to 141 (SYINIPVGVL…VKLFSLLSET (120 aa)) lines the a nucleoside 3',5'-cyclic phosphate pocket. Residues 155-228 (KLAKERVTKI…SKNWLVSKDL (74 aa)) form the HTH crp-type domain. The H-T-H motif DNA-binding region spans 188 to 207 (IQLLSDMAGISRETTSHIIN).

The protein resides in the cytoplasm. Its function is as follows. Positively regulates the expression of the arcABDCR operon under anaerobic conditions, thus playing an essential role in arginine catabolism. May also control the expression of genes encoding proteins which are involved in anaerobic metabolism. Can bind cyclic AMP. The chain is HTH-type transcriptional regulator ArcR (arcR) from Staphylococcus epidermidis (strain ATCC 35984 / DSM 28319 / BCRC 17069 / CCUG 31568 / BM 3577 / RP62A).